Here is a 543-residue protein sequence, read N- to C-terminus: Probable zinc transporter protein DDB_G0283629 (543 aa).

The segment at 1–175 (MENFKNNELE…EESKPLNQLR (175 aa)) is disordered. At 1-186 (MENFKNNELE…LDSKKKARYS (186 aa)) the chain is on the cytoplasmic side. Low complexity-rich tracts occupy residues 11-26 (SSPI…SINN) and 41-55 (NNNN…NSHI). Composition is skewed to basic and acidic residues over residues 56–66 (NNHDHKHNHEH) and 76–104 (HNHD…EHNV). Residues 105–116 (GNKNLLTNNNNQ) show a composition bias toward low complexity. Residues 130–140 (EDGSSSGGGGG) are compositionally biased toward gly residues. The helical transmembrane segment at 187–207 (LILALTLTTIFMVGEIVGGYF) threads the bilayer. The Extracellular segment spans residues 208-216 (ANSLAIMTD). A helical membrane pass occupies residues 217–237 (AAHLLTDIGAMFLSLFAMWIS). Residues 238 to 251 (QHPPTSSMSFGFHR) lie on the Cytoplasmic side of the membrane. Residues 252–272 (AEILGALVSVLMIWALTGVLV) form a helical membrane-spanning segment. Topologically, residues 273-289 (YEAIQRILYPPDAVDGK) are extracellular. The chain crosses the membrane as a helical span at residues 290–310 (IMFIIASCGLFINIIDAIILH). The Cytoplasmic segment spans residues 311-375 (WGSGGHGHSH…VRNINVHSAY (65 aa)). The segment at 319–342 (SHGGGHGHSHGIGGGTQKKKSKKN) is disordered. The chain crosses the membrane as a helical span at residues 376–396 (IHVLGDCFQSIGVMVASCIIW). Residues 397 to 402 (VHPHWK) lie on the Extracellular side of the membrane. A helical membrane pass occupies residues 403–423 (IADPITTLIFSVIVLGTTIKL). At 424–543 (LRESLGVLME…NDNLSSPPNQ (120 aa)) the chain is on the cytoplasmic side. The segment at 516–543 (KCKDHSCPPPKPKKKKIKNDNLSSPPNQ) is disordered.

The protein belongs to the cation diffusion facilitator (CDF) transporter (TC 2.A.4) family. SLC30A subfamily.

Its subcellular location is the membrane. Its function is as follows. May be involved in zinc transport from the cytoplasm to either intracellular organelles or extracellular spaces. The polypeptide is Probable zinc transporter protein DDB_G0283629 (Dictyostelium discoideum (Social amoeba)).